Consider the following 246-residue polypeptide: Transcription factor A, mitochondrial (246 aa).

Residues 1–42 constitute a mitochondrion transit peptide; that stretch reads MALLRGVWGVLSALGKSGADLCAVCGSRLRSPFSFAYVPRWF. Residues 50 to 118 constitute a DNA-binding region (HMG box 1); that stretch reads PKKPMTSYVR…VYKEEVNRIQ (69 aa). Phosphoserine; by PKA is present on residues Ser56 and Ser61. Thr122 is subject to Phosphothreonine. Positions 155–219 form a DNA-binding region, HMG box 2; it reads PKRPRSAYNI…RYYNEMKSWE (65 aa). Position 160 is a phosphoserine; by PKA (Ser160). Phosphoserine occurs at positions 193 and 195.

In terms of assembly, monomer; binds DNA as a monomer. Homodimer. Component of the mitochondrial transcription initiation complex, composed at least of TFB2M, TFAM and POLRMT. In this complex TFAM recruits POLRMT to the promoter whereas TFB2M induces structural changes in POLRMT to enable promoter opening and trapping of the DNA non-template strand. Upon metabolic stress, forms a complex composed of FOXO3, SIRT3, TFAM and POLRMT. Interacts with TFB1M and TFB2M. Interacts with CLPX; this enhances DNA-binding. In terms of processing, phosphorylation by PKA within the HMG box 1 impairs DNA binding and promotes degradation by the AAA+ Lon protease.

The protein resides in the mitochondrion. It is found in the mitochondrion matrix. The protein localises to the mitochondrion nucleoid. Binds to the mitochondrial light strand promoter and functions in mitochondrial transcription regulation. Component of the mitochondrial transcription initiation complex, composed at least of TFB2M, TFAM and POLRMT that is required for basal transcription of mitochondrial DNA. In this complex, TFAM recruits POLRMT to a specific promoter whereas TFB2M induces structural changes in POLRMT to enable promoter opening and trapping of the DNA non-template strand. Required for accurate and efficient promoter recognition by the mitochondrial RNA polymerase. Promotes transcription initiation from the HSP1 and the light strand promoter by binding immediately upstream of transcriptional start sites. Is able to unwind DNA. Bends the mitochondrial light strand promoter DNA into a U-turn shape via its HMG boxes. Required for maintenance of normal levels of mitochondrial DNA. May play a role in organizing and compacting mitochondrial DNA. The sequence is that of Transcription factor A, mitochondrial from Sus scrofa (Pig).